A 205-amino-acid polypeptide reads, in one-letter code: Leucyl/phenylalanyl-tRNA--protein transferase (205 aa).

Belongs to the L/F-transferase family.

It is found in the cytoplasm. It catalyses the reaction N-terminal L-lysyl-[protein] + L-leucyl-tRNA(Leu) = N-terminal L-leucyl-L-lysyl-[protein] + tRNA(Leu) + H(+). It carries out the reaction N-terminal L-arginyl-[protein] + L-leucyl-tRNA(Leu) = N-terminal L-leucyl-L-arginyl-[protein] + tRNA(Leu) + H(+). The enzyme catalyses L-phenylalanyl-tRNA(Phe) + an N-terminal L-alpha-aminoacyl-[protein] = an N-terminal L-phenylalanyl-L-alpha-aminoacyl-[protein] + tRNA(Phe). Its function is as follows. Functions in the N-end rule pathway of protein degradation where it conjugates Leu, Phe and, less efficiently, Met from aminoacyl-tRNAs to the N-termini of proteins containing an N-terminal arginine or lysine. This Mesorhizobium japonicum (strain LMG 29417 / CECT 9101 / MAFF 303099) (Mesorhizobium loti (strain MAFF 303099)) protein is Leucyl/phenylalanyl-tRNA--protein transferase.